Here is a 445-residue protein sequence, read N- to C-terminus: Trigger factor (445 aa).

A PPIase FKBP-type domain is found at 166–251 (GDVVVVDFVG…AKALKRPVDV (86 aa)).

The protein belongs to the FKBP-type PPIase family. Tig subfamily.

The protein localises to the cytoplasm. It catalyses the reaction [protein]-peptidylproline (omega=180) = [protein]-peptidylproline (omega=0). Involved in protein export. Acts as a chaperone by maintaining the newly synthesized protein in an open conformation. Functions as a peptidyl-prolyl cis-trans isomerase. In Gluconacetobacter diazotrophicus (strain ATCC 49037 / DSM 5601 / CCUG 37298 / CIP 103539 / LMG 7603 / PAl5), this protein is Trigger factor.